The sequence spans 303 residues: Phospholipase A1 2 (303 aa).

Residues cysteine 6 and cysteine 90 are joined by a disulfide bond. Catalysis depends on serine 140, which acts as the Nucleophile. Aspartate 168 functions as the Charge relay system in the catalytic mechanism. Cysteine 179 and cysteine 184 are joined by a disulfide. The Charge relay system role is filled by histidine 232. 3 disulfide bridges follow: cysteine 247-cysteine 271, cysteine 248-cysteine 296, and cysteine 264-cysteine 269.

The protein belongs to the AB hydrolase superfamily. Lipase family. As to expression, expressed by the venom gland.

The protein localises to the secreted. The catalysed reaction is a 1,2-diacyl-sn-glycero-3-phosphocholine + H2O = a 2-acyl-sn-glycero-3-phosphocholine + a fatty acid + H(+). In terms of biological role, catalyzes the hydrolysis of phosphatidylcholine with phospholipase A1 activity. May act as an allergen and induce hemolytic activity. This Dolichovespula maculata (Bald-faced hornet) protein is Phospholipase A1 2.